A 183-amino-acid chain; its full sequence is Large ribosomal subunit protein uL18 (183 aa).

This sequence belongs to the universal ribosomal protein uL18 family. In terms of assembly, part of the 50S ribosomal subunit. Contacts the 5S and 23S rRNAs.

In terms of biological role, this is one of the proteins that bind and probably mediate the attachment of the 5S RNA into the large ribosomal subunit, where it forms part of the central protuberance. This is Large ribosomal subunit protein uL18 from Halobacterium salinarum (strain ATCC 29341 / DSM 671 / R1).